The chain runs to 338 residues: Homeobox protein ceh-20 (338 aa).

The PBC domain occupies 4 to 187 (THPANLSELL…VMILRSRFLD (184 aa)). The tract at residues 11–91 (ELLDAVLKIN…EGVAGPDKGG (81 aa)) is PBC-A. The PBC-B stretch occupies residues 94–187 (GSDASGGDQA…VMILRSRFLD (94 aa)). Positions 188–250 (ARRKRRNFSK…NKRIRYKKNM (63 aa)) form a DNA-binding region, homeobox; TALE-type.

The protein belongs to the TALE/PBX homeobox family. In terms of assembly, interacts with Meis protein psa-3. Interacts with homeobox protein nob-1. Expressed in head dopaminergic neurons.

The protein localises to the nucleus. Transcription factor that binds to the 5'-TGATNNAT(G/T)(G/A)-3' PBC/Hox lineage enhancer region of sem-2 to promote cell fate specification in the postembryonic mesoderm (also known as the M lineage). Required for the M lineage-specific expression of the transcription factor, mls-2. Required for asymmetric division of the T hypodermal cell, probably acting via the regulation of asymmetric expression of Meis protein psa-3 in concert with homeobox protein nob-1 and the Wnt-MAPK pathway. Has a role in the mig-13 pathway to promote the guidance, migration and positioning of Q neuroblasts and their descendants along the anteroposterior body axis and the anterior migration of BDU interneurons. Also required for normal vulval formation. Plays a role in regulating gene expression in dopaminergic neurons, acting in midbody PDE neurons, and acting redundantly with ceh-40 in head neurons. May activate dopamine pathway genes in concert with ETS domain-containing protein ast-1, and homeobox proteins ceh-43 and ceh-40. In Caenorhabditis elegans, this protein is Homeobox protein ceh-20.